A 254-amino-acid polypeptide reads, in one-letter code: Pyridoxine 5'-phosphate synthase (254 aa).

Asn8 lines the 3-amino-2-oxopropyl phosphate pocket. 10 to 11 (DH) is a binding site for 1-deoxy-D-xylulose 5-phosphate. Arg19 provides a ligand contact to 3-amino-2-oxopropyl phosphate. His44 functions as the Proton acceptor in the catalytic mechanism. 1-deoxy-D-xylulose 5-phosphate is bound by residues Arg46 and His51. The active-site Proton acceptor is the Glu74. Thr104 is a binding site for 1-deoxy-D-xylulose 5-phosphate. Residue His198 is the Proton donor of the active site. 3-amino-2-oxopropyl phosphate is bound by residues Gly199 and 220-221 (GH).

Belongs to the PNP synthase family. Homooctamer; tetramer of dimers.

It is found in the cytoplasm. It catalyses the reaction 3-amino-2-oxopropyl phosphate + 1-deoxy-D-xylulose 5-phosphate = pyridoxine 5'-phosphate + phosphate + 2 H2O + H(+). Its pathway is cofactor biosynthesis; pyridoxine 5'-phosphate biosynthesis; pyridoxine 5'-phosphate from D-erythrose 4-phosphate: step 5/5. In terms of biological role, catalyzes the complicated ring closure reaction between the two acyclic compounds 1-deoxy-D-xylulose-5-phosphate (DXP) and 3-amino-2-oxopropyl phosphate (1-amino-acetone-3-phosphate or AAP) to form pyridoxine 5'-phosphate (PNP) and inorganic phosphate. This is Pyridoxine 5'-phosphate synthase from Caulobacter vibrioides (strain ATCC 19089 / CIP 103742 / CB 15) (Caulobacter crescentus).